The primary structure comprises 289 residues: N-acetylmuramoyl-L-alanine amidase AmiA (289 aa).

A signal peptide (tat-type signal) is located at residues 1-34 (MSTFKLLKTLTSRRQVLKTGLAALTLSGMSHAVA). Residues 36–61 (EETLKTSNGHSKPKTKKTGSKRLVML) are disordered. Basic residues predominate over residues 46 to 55 (SKPKTKKTGS). The 215-residue stretch at 59–273 (VMLDPGHGGI…IATAIANGII (215 aa)) folds into the MurNAc-LAA domain.

This sequence belongs to the N-acetylmuramoyl-L-alanine amidase 3 family. In terms of processing, predicted to be exported by the Tat system. The position of the signal peptide cleavage has not been experimentally proven.

The protein localises to the periplasm. It catalyses the reaction Hydrolyzes the link between N-acetylmuramoyl residues and L-amino acid residues in certain cell-wall glycopeptides.. Its function is as follows. Cell-wall hydrolase involved in septum cleavage during cell division. In Salmonella typhimurium (strain LT2 / SGSC1412 / ATCC 700720), this protein is N-acetylmuramoyl-L-alanine amidase AmiA (amiA).